A 200-amino-acid polypeptide reads, in one-letter code: Recombination protein RecR (200 aa).

Residues 57-72 form a C4-type zinc finger; the sequence is CRQCRTLTEDELCPQC. A Toprim domain is found at 80 to 175; that stretch reads TLLCVVEGPM…ITSRIAHGVP (96 aa).

This sequence belongs to the RecR family.

In terms of biological role, may play a role in DNA repair. It seems to be involved in an RecBC-independent recombinational process of DNA repair. It may act with RecF and RecO. The chain is Recombination protein RecR from Pseudomonas fluorescens (strain ATCC BAA-477 / NRRL B-23932 / Pf-5).